The chain runs to 506 residues: MAWALKLPLADEVIESGLVQDFDASLSGIGQELGAGAYSMSDVLALPIFKQEESSLPSENENKILPFQYVLCTATSPAVKLHEETLTYLNQGQSYEIRMLDNRKIGELPELNGKLVKSIFRVVFHDRRLQYTEHQQLEGWRWNRPGDRILDIDIPMSVGIIDPRANPTQLNTIEFLWDPAKRTSVFIQVHCISTEFTMRKHGGEKGVPFRVQIDTFKENENGEYTEHLHSASSQIKVFKPKGADRKQKTDREKMEKRTPQEKEKYQPSYETTILTECSPWPEITYVSNSPSPGFNSSHNSFPIGEGNGSPNHQPEPPAPIVDVSAGLTPIQNLMPTSTPQEAQQWLHRNRFAAFSRLFTNFSGADLLKLTREDVIQICGPADGIRLFNALKGRIVRPRLTIYVCQESQQLREQQQHKHENGEPGNGAFYVYHAIYLEEMTTIELTEKIAQLFSISPHQINQIYKQGPTGIHVLISDEMIQNFQDESCFILDTMKAETNDSYHIILK.

The 240-residue stretch at 61–300 (ENKILPFQYV…SPGFNSSHNS (240 aa)) folds into the Grh/CP2 DB domain. The tract at residues 133 to 395 (EHQQLEGWRW…LFNALKGRIV (263 aa)) is DNA-binding. Disordered regions lie at residues 238–268 (FKPKGADRKQKTDREKMEKRTPQEKEKYQPS) and 291–316 (SPGFNSSHNSFPIGEGNGSPNHQPEP). Residues 241–265 (KGADRKQKTDREKMEKRTPQEKEKY) show a composition bias toward basic and acidic residues. Positions 291–300 (SPGFNSSHNS) are enriched in polar residues.

The protein belongs to the grh/CP2 family. CP2 subfamily. Component of the SSP (stage selector protein) complex, which appears to be a heteromer of TFCP2 and 2 copies of NFE4.

The protein resides in the nucleus. In terms of biological role, may function as a transcription factor. In Xenopus laevis (African clawed frog), this protein is Transcription factor CP2 (tfcp2).